Reading from the N-terminus, the 824-residue chain is Dapper 1-B (824 aa).

Disordered regions lie at residues 1-33 (MKPI…RQRT), 131-150 (EEHL…LSDG), and 515-534 (HASS…EGSS). An interaction with tcf7l1-A region spans residues 2-343 (KPIPAAPEPL…PVRTNKPRTS (342 aa)). Residues 16–33 (DSPRRKDKGEAESERQRT) show a composition bias toward basic and acidic residues. A coiled-coil region spans residues 84–139 (EEKFLEDNILLLKKQLNCLRKRDAGLLSQLHELDKQINDLRIDVEKTEEHLETDSR). Residues 520 to 530 (FDERPPLDFKS) are compositionally biased toward basic and acidic residues. Residues 821-824 (MTTV) carry the PDZ-binding motif.

The protein belongs to the dapper family. In terms of assembly, interacts with dbf4 and tcf7l1-A. Interacts with dvl2/dsh; the interaction is required for dact1-b phosphorylation by CaMK1D and seems to become disrupted by the phosphorylation. Post-translationally, phosphorylated by CaMK1D; the phosphorylation requires binding to dvl2/dsh. In terms of tissue distribution, expressed both in the dorsal lip in early gastrula and throughout the posterior presumptive ectoderm in early neurula. Expressed in the dorsal neural folds at the tailbud stage and highly expressed in the tadpole head, including the brain, retina and cartilaginous branchial arch derivatives.

It is found in the cytoplasm. The protein localises to the nucleus. In terms of biological role, involved in regulation of intracellular signaling pathways during development. Specifically thought to play a role in canonical and/or non-canonical Wnt signaling pathways through interaction with DSH (Dishevelled) family proteins. Binds to dvl2 to regulate the degradation of beta-catenin (ctnnb1-A and possibly ctnnb1-B), thereby modulating the transcriptional activation of target genes of the Wnt signaling pathway. Seems to promote beta-catenin degradation if not phosphorylated and to block beta-catenin degradation if phosphorylated by CaMK1D. Involved in regulation of catenin delta/ctnnd1 protein level. May also bind to and directly stimulate the activity of tcf7l1-A. Also regulates the activation by dvl2 of jnk, a component of ctnnb1/beta-catenin-independent frizzled signaling. Required for notochord and head formation. This Xenopus laevis (African clawed frog) protein is Dapper 1-B (dact1-b).